Reading from the N-terminus, the 156-residue chain is Ecotin (156 aa).

Residues 1 to 19 form the signal peptide; sequence MKALLIAAGVAALSSTAMA. Cysteine 65 and cysteine 102 are oxidised to a cystine.

The protein belongs to the protease inhibitor I11 (ecotin) family. As to quaternary structure, homodimer.

It is found in the periplasm. In terms of biological role, general inhibitor of family S1 serine proteases. This Pseudomonas aeruginosa (strain LESB58) protein is Ecotin.